The primary structure comprises 153 residues: Ribosome maturation factor RimP (153 aa).

The protein belongs to the RimP family.

The protein resides in the cytoplasm. Its function is as follows. Required for maturation of 30S ribosomal subunits. This Burkholderia mallei (strain NCTC 10229) protein is Ribosome maturation factor RimP.